Here is a 498-residue protein sequence, read N- to C-terminus: Glycerol kinase (498 aa).

Threonine 12 contributes to the ADP binding site. ATP contacts are provided by threonine 12, threonine 13, and serine 14. Sn-glycerol 3-phosphate is bound at residue threonine 12. Residue arginine 16 coordinates ADP. Sn-glycerol 3-phosphate is bound by residues arginine 82, glutamate 83, and tyrosine 134. 3 residues coordinate glycerol: arginine 82, glutamate 83, and tyrosine 134. Histidine 230 is subject to Phosphohistidine; by HPr. Aspartate 244 lines the sn-glycerol 3-phosphate pocket. The glycerol site is built by aspartate 244 and glutamine 245. Residues threonine 266 and glycine 309 each coordinate ADP. The ATP site is built by threonine 266, glycine 309, glutamine 313, and glycine 410. Residues glycine 410 and asparagine 414 each contribute to the ADP site.

This sequence belongs to the FGGY kinase family. In terms of assembly, homotetramer and homodimer (in equilibrium). In terms of processing, the phosphoenolpyruvate-dependent sugar phosphotransferase system (PTS), including enzyme I, and histidine-containing protein (HPr) are required for the phosphorylation, which leads to the activation of the enzyme.

The catalysed reaction is glycerol + ATP = sn-glycerol 3-phosphate + ADP + H(+). The protein operates within polyol metabolism; glycerol degradation via glycerol kinase pathway; sn-glycerol 3-phosphate from glycerol: step 1/1. Its activity is regulated as follows. Activated by phosphorylation and inhibited by fructose 1,6-bisphosphate (FBP). Its function is as follows. Key enzyme in the regulation of glycerol uptake and metabolism. Catalyzes the phosphorylation of glycerol to yield sn-glycerol 3-phosphate. This is Glycerol kinase from Staphylococcus aureus (strain MRSA252).